A 373-amino-acid chain; its full sequence is tRNA-specific 2-thiouridylase MnmA (373 aa).

ATP is bound by residues 12–19 (GMSGGVDS) and M38. The interval 98–100 (NPD) is interaction with target base in tRNA. C103 serves as the catalytic Nucleophile. A disulfide bridge links C103 with C200. G127 is an ATP binding site. The interval 150–152 (KDQ) is interaction with tRNA. C200 (cysteine persulfide intermediate) is an active-site residue. Residues 312-313 (RY) are interaction with tRNA.

This sequence belongs to the MnmA/TRMU family.

It localises to the cytoplasm. It catalyses the reaction S-sulfanyl-L-cysteinyl-[protein] + uridine(34) in tRNA + AH2 + ATP = 2-thiouridine(34) in tRNA + L-cysteinyl-[protein] + A + AMP + diphosphate + H(+). Catalyzes the 2-thiolation of uridine at the wobble position (U34) of tRNA, leading to the formation of s(2)U34. The polypeptide is tRNA-specific 2-thiouridylase MnmA (Streptococcus pyogenes serotype M1).